Reading from the N-terminus, the 382-residue chain is Dodecanoyl-[acyl-carrier-protein] hydrolase, chloroplastic (382 aa).

A chloroplast-targeting transit peptide spans 1–83 (MATTSLASAF…FSAAEKQWTN (83 aa)). Catalysis depends on residues Asn-283, His-285, and Cys-320.

Belongs to the acyl-ACP thioesterase family. As to quaternary structure, forms homodimers. In terms of tissue distribution, expressed in developing cotyledons. Not detected in leaves.

The protein localises to the plastid. It is found in the chloroplast. The enzyme catalyses dodecanoyl-[ACP] + H2O = dodecanoate + holo-[ACP] + H(+). In terms of biological role, plays an essential role in chain termination during de novo fatty acid synthesis. High thioesterase activity for lauroyl-ACP versus other acyl-ACPs. This is Dodecanoyl-[acyl-carrier-protein] hydrolase, chloroplastic from Umbellularia californica (California bay laurel).